A 522-amino-acid chain; its full sequence is MFPWGLSCLSVLGAAGTALLCAGLLLSLAQHLWTLRWMLSRDRASTLPLPKGSMGWPFFGETLHWLVQGSRFHSSRRERYGTVFKTHLLGRPVIRVSGAENVRTILLGEHRLVRSQWPQSAHILLGSHTLLGAVGEPHRRRRKVLARVFSRAALERYVPRLQGALRHEVRSWCAAGGPVSVYDASKALTFRMAARILLGLRLDEAQCATLARTFEQLVENLFSLPLDVPFSGLRKGIRARDQLHRHLEGAISEKLHEDKAAEPGDALDLIIHSARELGHEPSMQELKESAVELLFAAFFTTASASTSLVLLLLQHPAAIAKIREELVAQGLGRACGCAPGAAGGSEGPPPDCGCEPDLSLAALGRLRYVDCVVKEVLRLLPPVSGGYRTALRTFELDGYQIPKGWSVMYSIRDTHETAAVYRSPPEGFDPERFGAAREDSRGASSRFHYIPFGGGARSCLGQELAQAVLQLLAVELVRTARWELATPAFPAMQTVPIVHPVDGLRLFFHPLTPSVAGNGLCL.

The helical transmembrane segment at 9 to 29 (LSVLGAAGTALLCAGLLLSLA) threads the bilayer. Cys459 serves as a coordination point for heme.

It belongs to the cytochrome P450 family. Heme is required as a cofactor. Detected in most tissues at very low level.

It is found in the membrane. It carries out the reaction an organic molecule + reduced [NADPH--hemoprotein reductase] + O2 = an alcohol + oxidized [NADPH--hemoprotein reductase] + H2O + H(+). The enzyme catalyses all-trans-retinoate + reduced [NADPH--hemoprotein reductase] + O2 = all-trans-4-hydroxyretinoate + oxidized [NADPH--hemoprotein reductase] + H2O + H(+). It catalyses the reaction all-trans-4-hydroxyretinoate + reduced [NADPH--hemoprotein reductase] + O2 = all-trans-4-oxoretinoate + oxidized [NADPH--hemoprotein reductase] + 2 H2O + H(+). The catalysed reaction is 9-cis-retinoate + reduced [NADPH--hemoprotein reductase] + O2 = 9-cis-4-hydroxyretinoate + oxidized [NADPH--hemoprotein reductase] + H2O + H(+). It carries out the reaction 9-cis-4-hydroxyretinoate + reduced [NADPH--hemoprotein reductase] + O2 = 9-cis-4-oxoretinoate + oxidized [NADPH--hemoprotein reductase] + 2 H2O + H(+). The enzyme catalyses all-trans-4-hydroxy-13,14-dihydroretinoate + reduced [NADPH--hemoprotein reductase] + O2 = all-trans-4-oxo-13,14-dihydroretinoate + oxidized [NADPH--hemoprotein reductase] + 2 H2O + H(+). It catalyses the reaction all-trans-13,14-dihydroretinoate + reduced [NADPH--hemoprotein reductase] + O2 = all-trans-4-hydroxy-13,14-dihydroretinoate + oxidized [NADPH--hemoprotein reductase] + H2O + H(+). Its function is as follows. A cytochrome P450 monooxygenase involved in the metabolism of retinoates (RAs), the active metabolites of vitamin A, and critical signaling molecules in animals. RAs exist as at least four different isomers: all-trans-RA (atRA), 9-cis-RA, 13-cis-RA, and 9,13-dicis-RA, where atRA is considered to be the biologically active isomer, although 9-cis-RA and 13-cis-RA also have activity. Catalyzes the oxidation of atRA primarily at C-4. Oxidation of atRA limits its biological activity and initiates a degradative process leading to its eventual elimination, thereby contributes to the regulation of atRA homeostasis and signaling. Able to metabolize other RAs such as 9-cis with high efficiency. Can oxidize all-trans-13,14-dihydroretinoate (DRA) to metabolites which could include all-trans-4-oxo-DRA, all-trans-4-hydroxy-DRA, all-trans-5,8-epoxy-DRA, and all-trans-18-hydroxy-DRA. Shares sequence similarity with other CYP26 family members, but has higher affinity to 9-cis-RA and is much less sensitive to the inhibitory effects of ketoconazole. In cooperation with Cyp26a1, contributes to the CNS patterning and the development of regions of higher visual acuity. The sequence is that of Cytochrome P450 26C1 (CYP26C1) from Homo sapiens (Human).